The following is a 95-amino-acid chain: Aspartyl/glutamyl-tRNA(Asn/Gln) amidotransferase subunit C (95 aa).

Belongs to the GatC family. In terms of assembly, heterotrimer of A, B and C subunits.

It catalyses the reaction L-glutamyl-tRNA(Gln) + L-glutamine + ATP + H2O = L-glutaminyl-tRNA(Gln) + L-glutamate + ADP + phosphate + H(+). The catalysed reaction is L-aspartyl-tRNA(Asn) + L-glutamine + ATP + H2O = L-asparaginyl-tRNA(Asn) + L-glutamate + ADP + phosphate + 2 H(+). In terms of biological role, allows the formation of correctly charged Asn-tRNA(Asn) or Gln-tRNA(Gln) through the transamidation of misacylated Asp-tRNA(Asn) or Glu-tRNA(Gln) in organisms which lack either or both of asparaginyl-tRNA or glutaminyl-tRNA synthetases. The reaction takes place in the presence of glutamine and ATP through an activated phospho-Asp-tRNA(Asn) or phospho-Glu-tRNA(Gln). This is Aspartyl/glutamyl-tRNA(Asn/Gln) amidotransferase subunit C from Bartonella quintana (strain Toulouse) (Rochalimaea quintana).